We begin with the raw amino-acid sequence, 797 residues long: Striatin-3 (797 aa).

Position 1 is an N-acetylmethionine (M1). Gly residues-rich tracts occupy residues 1-12 (MDELAGGGGGGP) and 33-43 (GGNGAAGGGGP). Residues 1–60 (MDELAGGGGGGPAMASPPRQQQGPGGNMSLSPGGNGAAGGGGPPATEGAGPAAGPELSRP) are disordered. Low complexity predominate over residues 44–55 (PATEGAGPAAGP). Residues 71–79 (YIQHEWARF) are caveolin-binding. Residues 77–136 (ARFEMERAHWEVERAELQARIAFLQGERKGQENLKKDLVRRIKMLEYALKQERAKYHKLK) adopt a coiled-coil conformation. T150 bears the Phosphothreonine mark. Residues 166–183 (QNSQLTWKQGRQLLRQYL) form a calmodulin-binding region. A phosphoserine mark is found at S202, S214, S229, S257, and S335. The interval 313–336 (DGEGAGEARSSGDGTEWDKDDLSP) is disordered. 6 WD repeats span residues 478-517 (SHFD…PAKK), 531-570 (AHIG…VDPY), 584-623 (AHTD…PCIC), 679-718 (QSSN…MIHS), 721-760 (AHLD…CVQE), and 767-796 (KLDE…AKVF).

It belongs to the WD repeat striatin family. In terms of assembly, tetramerizes. Part of the core of STRIPAK complexes composed of PP2A catalytic and scaffolding subunits, the striatins (PP2A regulatory subunits), the striatin-associated proteins MOB4, STRIP1 and STRIP2, PDCD10 and members of the STE20 kinases, such as STK24 and STK26. The STRIPAK complex can be extended by adapter proteins such as SLMAP:SIKE1 or CTTNBP2NL. Interacts with CDC42BPB.

The protein resides in the cytoplasm. Its subcellular location is the membrane. Its function is as follows. Calmodulin-binding scaffolding protein which is the center of the striatin-interacting phosphatase and kinase (STRIPAK) complexes. STRIPAK complexes have critical roles in protein (de)phosphorylation and are regulators of multiple signaling pathways including Hippo, MAPK, nuclear receptor and cytoskeleton remodeling. Different types of STRIPAK complexes are involved in a variety of biological processes such as cell growth, differentiation, apoptosis, metabolism and immune regulation. The polypeptide is Striatin-3 (STRN3) (Bos taurus (Bovine)).